A 513-amino-acid chain; its full sequence is Microtubule-associated protein 70-5 (513 aa).

4 disordered regions span residues 1–20 (MTAAENPFVSDTSSLQSQLK), 60–81 (KLGATENQVDQKELERKKLEEE), 347–367 (FLTSGGGSKKRSSSQLRGSVT), and 393–413 (ANGLTDQHEEDSERKTEEDGN). Polar residues predominate over residues 9 to 18 (VSDTSSLQSQ). Residues 10–322 (SDTSSLQSQL…LKLRLKTIED (313 aa)) adopt a coiled-coil conformation. Residues 60-80 (KLGATENQVDQKELERKKLEE) show a composition bias toward basic and acidic residues. The interval 190–400 (FLEKINRQKV…ITANGLTDQH (211 aa)) is required for targeting to microtubules. Residues 426 to 501 (DRLQKEVIAL…EESKLCRKAK (76 aa)) adopt a coiled-coil conformation.

Belongs to the MAP70 family. Interacts with MAP70.1 and itself.

The protein localises to the cytoplasm. Its subcellular location is the cytoskeleton. Plant-specific protein that interact with microtubules and regulates microtubule dynamics. May play a role in anisotropic cell expansion and organ growth. In association with MAP70.1, is essential for the normal banding pattern of secondary cell wall and for the proper development of xylem tracheary elements and wood formation. This Arabidopsis thaliana (Mouse-ear cress) protein is Microtubule-associated protein 70-5 (MAP70.5).